The primary structure comprises 141 residues: Nucleoside diphosphate kinase (141 aa).

Residues Lys9, Phe57, Arg85, Thr91, Arg102, and Asn112 each contribute to the ATP site. Residue His115 is the Pros-phosphohistidine intermediate of the active site.

This sequence belongs to the NDK family. In terms of assembly, homotetramer. Requires Mg(2+) as cofactor.

The protein localises to the cytoplasm. The catalysed reaction is a 2'-deoxyribonucleoside 5'-diphosphate + ATP = a 2'-deoxyribonucleoside 5'-triphosphate + ADP. It carries out the reaction a ribonucleoside 5'-diphosphate + ATP = a ribonucleoside 5'-triphosphate + ADP. Functionally, major role in the synthesis of nucleoside triphosphates other than ATP. The ATP gamma phosphate is transferred to the NDP beta phosphate via a ping-pong mechanism, using a phosphorylated active-site intermediate. This Chlamydia felis (strain Fe/C-56) (Chlamydophila felis) protein is Nucleoside diphosphate kinase.